The following is a 436-amino-acid chain: 3-ketoacyl-CoA thiolase (436 aa).

The active-site Acyl-thioester intermediate is the cysteine 99. Residues histidine 392 and cysteine 422 each act as proton acceptor in the active site.

Belongs to the thiolase-like superfamily. Thiolase family. As to quaternary structure, heterotetramer of two alpha chains (FadJ) and two beta chains (FadI).

The protein resides in the cytoplasm. It catalyses the reaction an acyl-CoA + acetyl-CoA = a 3-oxoacyl-CoA + CoA. It functions in the pathway lipid metabolism; fatty acid beta-oxidation. Catalyzes the final step of fatty acid oxidation in which acetyl-CoA is released and the CoA ester of a fatty acid two carbons shorter is formed. This is 3-ketoacyl-CoA thiolase from Escherichia coli O6:H1 (strain CFT073 / ATCC 700928 / UPEC).